The primary structure comprises 229 residues: Urease accessory protein UreF (229 aa).

It belongs to the UreF family. UreD, UreF and UreG form a complex that acts as a GTP-hydrolysis-dependent molecular chaperone, activating the urease apoprotein by helping to assemble the nickel containing metallocenter of UreC. The UreE protein probably delivers the nickel.

Its subcellular location is the cytoplasm. Required for maturation of urease via the functional incorporation of the urease nickel metallocenter. The sequence is that of Urease accessory protein UreF from Staphylococcus aureus (strain JH1).